The following is a 55-amino-acid chain: Sporulation killing factor (55 aa).

Positions 1-29 (MKRNQKEWESVSKKGLMKPGGTSIVKAAG) are excised as a propeptide. Cys-30 and Cys-45 are disulfide-bonded. Residues 30–55 (CMGCWASKSIAMTRVCALPHPAMRAI) constitute a cross-link (cyclopeptide (Cys-Ile)). The segment at residues 33 to 41 (CWASKSIAM) is a cross-link (2-(S-cysteinyl)-methionine (Cys-Met)).

This is a cyclic peptide. The first step in SKF maturation is probably thioether bond formation.

The protein resides in the secreted. Functionally, produces a 26-residue extracellular sporulation killing factor (SKF) that induces the lysis of other B.subtilis cells that have not entered the sporulation pathway, providing a source of nutrients to support sporulation, and at the same time delaying commitment to the energetically expensive and irreversible onset of sporulation. Can also inhibit growth of other bacteria at high concentrations. Addition of SKF to solid cultures induces killing, but it is much less effective than SDP (AC O34344). Has a role in protecting the secreted lipase LipA against proteolysis, either by modulating its folding or by acting as a protease inhibitor. This Bacillus subtilis (strain 168) protein is Sporulation killing factor.